The primary structure comprises 310 residues: MKISVIGAGNVGATAAHRLAEKQLAHEVVLIDIVEGIPQGKALDMYESGPVGLFDTAIHGSNDYMASADSDIVLITAGLARKPGMTREDLLMKNAGIVKEVTDQVMKHSSNPILVMVSNPLDVMTFVAHASSGLGKERVIGMAGVLDAARFRSFIAEELNVSMQDVNAFVLGGHGDSMVPVVKYTSVAGIPITELLSQEKIDALVERTRNGGVEIVNYLKNGSAFYAPAASAVEMIEAIVKDRKRILACTTLLEGEYGINNVFCGVPVKIGKNGVEEILEINLAPAELDALKHSASLVQENCKSLEALLA.

NAD(+) is bound by residues 7-12 and D32; that span reads GAGNVG. 2 residues coordinate substrate: R81 and R87. Residues N94 and 117 to 119 each bind NAD(+); that span reads VSN. Substrate-binding residues include N119 and R150. The active-site Proton acceptor is the H174.

It belongs to the LDH/MDH superfamily. MDH type 3 family.

The enzyme catalyses (S)-malate + NAD(+) = oxaloacetate + NADH + H(+). Functionally, catalyzes the reversible oxidation of malate to oxaloacetate. This Chlorobium phaeobacteroides (strain DSM 266 / SMG 266 / 2430) protein is Malate dehydrogenase.